The following is a 391-amino-acid chain: tRNA-specific 2-thiouridylase MnmA (391 aa).

ATP is bound by residues 9-16 (GMSGGVDS) and methionine 35. The segment at 95-97 (NPD) is interaction with target base in tRNA. Cysteine 100 acts as the Nucleophile in catalysis. Cysteine 100 and cysteine 196 form a disulfide bridge. Glycine 124 is a binding site for ATP. The interval 146-148 (KDQ) is interaction with tRNA. The active-site Cysteine persulfide intermediate is cysteine 196. Residues 308–309 (RY) form an interaction with tRNA region.

This sequence belongs to the MnmA/TRMU family.

Its subcellular location is the cytoplasm. The enzyme catalyses S-sulfanyl-L-cysteinyl-[protein] + uridine(34) in tRNA + AH2 + ATP = 2-thiouridine(34) in tRNA + L-cysteinyl-[protein] + A + AMP + diphosphate + H(+). Catalyzes the 2-thiolation of uridine at the wobble position (U34) of tRNA, leading to the formation of s(2)U34. This chain is tRNA-specific 2-thiouridylase MnmA, found in Burkholderia orbicola (strain MC0-3).